Consider the following 243-residue polypeptide: Killer cell lectin-like receptor subfamily I member 1 (243 aa).

Topologically, residues 1 to 80 are cytoplasmic; sequence MPHSKHRDYT…RQGPKSAVWR (80 aa). Short sequence motifs (ITIM motif) lie at residues 16-21 and 47-52; these read IPYTEL and LKYAEL. A helical; Signal-anchor for type II membrane protein membrane pass occupies residues 81 to 101; sequence VVTCVLGVLCVVLMITMGILV. Over 102-243 the chain is Extracellular; the sequence is PKLFSGQEEQ…KPYACEFNKM (142 aa). N-linked (GlcNAc...) asparagine glycans are attached at residues Asn-123, Asn-191, Asn-194, Asn-200, and Asn-214. In terms of domain architecture, C-type lectin spans 137 to 239; the sequence is FGNNFYLFFR…CSSKKPYACE (103 aa). 2 disulfide bridges follow: Cys-158-Cys-238 and Cys-217-Cys-230.

In terms of assembly, heterodimer with KLRE1. Interacts with PTPN6. In terms of tissue distribution, expressed in natural killer (NK) cells.

It is found in the cell membrane. Its function is as follows. Lectin-like receptor for natural killer (NK) cells. Heterodimer formation with KLRE1 mediates inhibition of NK cell cytolytic activity. The polypeptide is Killer cell lectin-like receptor subfamily I member 1 (Rattus norvegicus (Rat)).